The sequence spans 244 residues: Gamma-gliadin (244 aa).

Residues 18-64 (QQPFLQQPQQPSPQPQQVVQIISPATPTTIPSAGKPTSAPFPQQQQQ) form a disordered region. Residues 35 to 48 (VVQIISPATPTTIP) are compositionally biased toward polar residues.

This sequence belongs to the gliadin/glutenin family.

Functionally, gliadin is the major seed storage protein in wheat. The chain is Gamma-gliadin from Triticum aestivum (Wheat).